We begin with the raw amino-acid sequence, 360 residues long: Peptide chain release factor 1 (360 aa).

Glutamine 235 is modified (N5-methylglutamine).

This sequence belongs to the prokaryotic/mitochondrial release factor family. Methylated by PrmC. Methylation increases the termination efficiency of RF1.

It is found in the cytoplasm. In terms of biological role, peptide chain release factor 1 directs the termination of translation in response to the peptide chain termination codons UAG and UAA. The polypeptide is Peptide chain release factor 1 (Bordetella pertussis (strain Tohama I / ATCC BAA-589 / NCTC 13251)).